Reading from the N-terminus, the 537-residue chain is CTP synthase (537 aa).

Residues 1–268 are amidoligase domain; that stretch reads MSTKYIFVTG…DQIVCDHLKL (268 aa). Residue S14 coordinates CTP. Residue S14 coordinates UTP. Position 15-20 (15-20) interacts with ATP; the sequence is SIGKGI. An L-glutamine-binding site is contributed by Y55. An ATP-binding site is contributed by D72. Mg(2+)-binding residues include D72 and E142. Residues 149 to 151, 189 to 194, and K225 each bind CTP; these read DIE and KTKPTQ. UTP is bound by residues 189-194 and K225; that span reads KTKPTQ. Residues 293–536 enclose the Glutamine amidotransferase type-1 domain; the sequence is RIALVGKYVE…VTAAVEKSSD (244 aa). An L-glutamine-binding site is contributed by G355. Residue C382 is the Nucleophile; for glutamine hydrolysis of the active site. L-glutamine-binding positions include 383 to 386, E406, and R464; that span reads LGMQ. Active-site residues include H509 and E511.

It belongs to the CTP synthase family. In terms of assembly, homotetramer.

The catalysed reaction is UTP + L-glutamine + ATP + H2O = CTP + L-glutamate + ADP + phosphate + 2 H(+). The enzyme catalyses L-glutamine + H2O = L-glutamate + NH4(+). It catalyses the reaction UTP + NH4(+) + ATP = CTP + ADP + phosphate + 2 H(+). Its pathway is pyrimidine metabolism; CTP biosynthesis via de novo pathway; CTP from UDP: step 2/2. Allosterically activated by GTP, when glutamine is the substrate; GTP has no effect on the reaction when ammonia is the substrate. The allosteric effector GTP functions by stabilizing the protein conformation that binds the tetrahedral intermediate(s) formed during glutamine hydrolysis. Inhibited by the product CTP, via allosteric rather than competitive inhibition. In terms of biological role, catalyzes the ATP-dependent amination of UTP to CTP with either L-glutamine or ammonia as the source of nitrogen. Regulates intracellular CTP levels through interactions with the four ribonucleotide triphosphates. The polypeptide is CTP synthase (Streptococcus sanguinis (strain SK36)).